The primary structure comprises 760 residues: Catalase-peroxidase (760 aa).

Positions 1–45 (MKGTPFRSPHLYQEGSSCMHRTIRSVAAVLTVVLSATIPMVPAWS) are cleaved as a signal peptide. The tryptophyl-tyrosyl-methioninium (Trp-Tyr) (with M-271) cross-link spans 124-245 (WHGAGTYRTY…LAATQMGLIY (122 aa)). Residue His125 is the Proton acceptor of the active site. The tryptophyl-tyrosyl-methioninium (Tyr-Met) (with W-124) cross-link spans 245 to 271 (YVNPEGPNGVPDPVAAARDIREAFGGM). A heme b-binding site is contributed by His286.

Belongs to the peroxidase family. Peroxidase/catalase subfamily. As to quaternary structure, homodimer or homotetramer. It depends on heme b as a cofactor. Formation of the three residue Trp-Tyr-Met cross-link is important for the catalase, but not the peroxidase activity of the enzyme.

The enzyme catalyses H2O2 + AH2 = A + 2 H2O. It catalyses the reaction 2 H2O2 = O2 + 2 H2O. Bifunctional enzyme with both catalase and broad-spectrum peroxidase activity. In Granulibacter bethesdensis (strain ATCC BAA-1260 / CGDNIH1), this protein is Catalase-peroxidase.